The following is a 402-amino-acid chain: MSLTGCLPPRPPCSMRRRTSGGGASVSPVVVMASTAGVGGIGNPTPRGKKPFAPWREVPPQVTHTLPPEKKEVFDSLEGWAADTILPYLKPVEESWQPQDHLPDPRSPSFGDEVAALRERAAGLPDDHLVCLVGDMVTEEALPTYQTMLNTMDGGVRDETGAGGSAWAVWTRAWAAEENRHGDLMNKYLYLTGRVDMRQVEKTIQYLIGSGMDPRTENDPYMGFIYTTFQERATSISHGNTARHAGRHGDAALARVCGTVAADEKRHEAAYAAIVAKLFEVDPDYTVRAFARMMRRKVAMPARLMYDGADDRLFARFAAVAQRLGVYTAADYAGIIEFLVARWGVPGLAAGLSGEGRRAQDFVCSLGPRFRRMEERAQEAAKRAPPAAAAPFSWIHGRQVQL.

2 disordered regions span residues 1–25 (MSLT…GGAS) and 38–66 (VGGI…THTL). The transit peptide at 1–32 (MSLTGCLPPRPPCSMRRRTSGGGASVSPVVVM) directs the protein to the chloroplast. Fe cation-binding residues include Glu139, Glu178, His181, Glu231, Glu264, and His267.

Belongs to the fatty acid desaturase type 2 family. In terms of assembly, homodimer. The cofactor is Fe(2+).

It localises to the plastid. The protein resides in the chloroplast. It functions in the pathway lipid metabolism; fatty acid metabolism. Introduces a cis double bond in the acyl chain of an acyl-[acyl-carrier protein]. The chain is Acyl-[acyl-carrier-protein] desaturase 3, chloroplastic from Oryza sativa subsp. indica (Rice).